We begin with the raw amino-acid sequence, 115 residues long: NADH-ubiquinone oxidoreductase chain 3 (115 aa).

A run of 3 helical transmembrane segments spans residues 4-24 (LMVM…AFWL), 55-75 (FFLV…LLPL), and 87-107 (MMLT…YEWM).

This sequence belongs to the complex I subunit 3 family. As to quaternary structure, core subunit of respiratory chain NADH dehydrogenase (Complex I) which is composed of 45 different subunits. Interacts with TMEM186. Interacts with TMEM242.

The protein resides in the mitochondrion inner membrane. The catalysed reaction is a ubiquinone + NADH + 5 H(+)(in) = a ubiquinol + NAD(+) + 4 H(+)(out). In terms of biological role, core subunit of the mitochondrial membrane respiratory chain NADH dehydrogenase (Complex I) which catalyzes electron transfer from NADH through the respiratory chain, using ubiquinone as an electron acceptor. Essential for the catalytic activity of complex I. This Peromyscus mexicanus (Mexican deer mouse) protein is NADH-ubiquinone oxidoreductase chain 3.